Reading from the N-terminus, the 122-residue chain is Basic phospholipase A2 Cdr-12 (122 aa).

7 disulfide bridges follow: cysteine 26–cysteine 115, cysteine 28–cysteine 44, cysteine 43–cysteine 95, cysteine 49–cysteine 122, cysteine 50–cysteine 88, cysteine 57–cysteine 81, and cysteine 75–cysteine 86. Tyrosine 27, glycine 29, and glycine 31 together coordinate Ca(2+). Residue histidine 47 is part of the active site. Aspartate 48 contributes to the Ca(2+) binding site. Aspartate 89 is an active-site residue.

It depends on Ca(2+) as a cofactor. As to expression, expressed by the venom gland.

It is found in the secreted. It catalyses the reaction a 1,2-diacyl-sn-glycero-3-phosphocholine + H2O = a 1-acyl-sn-glycero-3-phosphocholine + a fatty acid + H(+). Functionally, snake venom phospholipase A2 (PLA2) that induces myonecrosis and edema upon intramuscular injections in mice. In vitro, causes a potent blockade of neuromuscular transmission in young chicken biventer cervicis preparation and produces cytotoxicity in murine C2C12 skeletal muscle myotubes and lack cytolytic activity upon myoblasts in vitro. PLA2 catalyzes the calcium-dependent hydrolysis of the 2-acyl groups in 3-sn-phosphoglycerides. This is Basic phospholipase A2 Cdr-12 from Crotalus durissus ruruima (South American rattlesnake).